A 187-amino-acid chain; its full sequence is Adenylate kinase (187 aa).

12 to 17 contributes to the ATP binding site; that stretch reads GAGKGT. The interval 32–61 is NMP; the sequence is STGDIFRANLAENTELGQKARQFMDAGDLV. Residues threonine 33, arginine 38, 59-61, 87-90, and glutamine 94 contribute to the AMP site; these read DLV and GYPR. Residues 128–134 are LID; it reads GRGRADD. Arginine 129 contacts ATP. AMP contacts are provided by arginine 131 and arginine 142. Arginine 170 is an ATP binding site.

It belongs to the adenylate kinase family. In terms of assembly, monomer.

Its subcellular location is the cytoplasm. The catalysed reaction is AMP + ATP = 2 ADP. Its pathway is purine metabolism; AMP biosynthesis via salvage pathway; AMP from ADP: step 1/1. In terms of biological role, catalyzes the reversible transfer of the terminal phosphate group between ATP and AMP. Plays an important role in cellular energy homeostasis and in adenine nucleotide metabolism. This Leuconostoc mesenteroides subsp. mesenteroides (strain ATCC 8293 / DSM 20343 / BCRC 11652 / CCM 1803 / JCM 6124 / NCDO 523 / NBRC 100496 / NCIMB 8023 / NCTC 12954 / NRRL B-1118 / 37Y) protein is Adenylate kinase.